The chain runs to 456 residues: Bifunctional protein GlmU (456 aa).

The pyrophosphorylase stretch occupies residues M1 to R229. UDP-N-acetyl-alpha-D-glucosamine contacts are provided by residues L11 to G14, K25, Q76, G81 to T82, Y103 to D105, G140, E154, N169, and N227. D105 provides a ligand contact to Mg(2+). N227 provides a ligand contact to Mg(2+). A linker region spans residues L230–A250. Residues G251–K456 form an N-acetyltransferase region. UDP-N-acetyl-alpha-D-glucosamine-binding residues include R333 and K351. Residue H363 is the Proton acceptor of the active site. The UDP-N-acetyl-alpha-D-glucosamine site is built by Y366 and N377. Acetyl-CoA contacts are provided by residues A380, N386–Y387, S405, A423, and R440.

It in the N-terminal section; belongs to the N-acetylglucosamine-1-phosphate uridyltransferase family. In the C-terminal section; belongs to the transferase hexapeptide repeat family. In terms of assembly, homotrimer. Requires Mg(2+) as cofactor.

It localises to the cytoplasm. It carries out the reaction alpha-D-glucosamine 1-phosphate + acetyl-CoA = N-acetyl-alpha-D-glucosamine 1-phosphate + CoA + H(+). The enzyme catalyses N-acetyl-alpha-D-glucosamine 1-phosphate + UTP + H(+) = UDP-N-acetyl-alpha-D-glucosamine + diphosphate. Its pathway is nucleotide-sugar biosynthesis; UDP-N-acetyl-alpha-D-glucosamine biosynthesis; N-acetyl-alpha-D-glucosamine 1-phosphate from alpha-D-glucosamine 6-phosphate (route II): step 2/2. It functions in the pathway nucleotide-sugar biosynthesis; UDP-N-acetyl-alpha-D-glucosamine biosynthesis; UDP-N-acetyl-alpha-D-glucosamine from N-acetyl-alpha-D-glucosamine 1-phosphate: step 1/1. It participates in bacterial outer membrane biogenesis; LPS lipid A biosynthesis. Catalyzes the last two sequential reactions in the de novo biosynthetic pathway for UDP-N-acetylglucosamine (UDP-GlcNAc). The C-terminal domain catalyzes the transfer of acetyl group from acetyl coenzyme A to glucosamine-1-phosphate (GlcN-1-P) to produce N-acetylglucosamine-1-phosphate (GlcNAc-1-P), which is converted into UDP-GlcNAc by the transfer of uridine 5-monophosphate (from uridine 5-triphosphate), a reaction catalyzed by the N-terminal domain. In Shigella sonnei (strain Ss046), this protein is Bifunctional protein GlmU.